Reading from the N-terminus, the 312-residue chain is MELLKRKLYAKILMMVMVIWIAPMTNGHDHASHVPGGRPGAHPSHGAHPAHGAHPSHGAHPSHGAHPSHGAHPSHGALPSHGGQVPHSGWGHGRATFYGDINGGETQQGACGYGDLHKQGYGLETAALSTALFNNGSRCGACYEIMCEHAPQWCLPGSIKITATNFCPPDFTKPNDNWCNPPQKHFDLSQPMFLKIAKYKAGVVPVKFRRVPCAKIGGVKFEIKGNPHFLMILPYNVGGAGAVRAMQIKGTRTQWIAMKKNWGQIWSTGVVLTGQCLSFRLTTSDGVMKEFIDVTPPDWKCNGQSFDGKVNF.

A signal peptide spans 1–27; it reads MELLKRKLYAKILMMVMVIWIAPMTNG. Residues 31–86 are disordered; it reads ASHVPGGRPGAHPSHGAHPAHGAHPSHGAHPSHGAHPSHGAHPSHGALPSHGGQVP. Positions 40–77 are enriched in low complexity; sequence GAHPSHGAHPAHGAHPSHGAHPSHGAHPSHGAHPSHGA. Tandem repeats lie at residues 42–47, 48–53, 54–59, 60–65, 66–71, and 72–77. Residues 42–77 form a 6 X 6 AA tandem repeats of H-P-S-H-G-A region; it reads HPSHGAHPAHGAHPSHGAHPSHGAHPSHGAHPSHGA. The Expansin-like EG45 domain occupies 108 to 218; that stretch reads QGACGYGDLH…RRVPCAKIGG (111 aa). In terms of domain architecture, Expansin-like CBD spans 228–307; the sequence is HFLMILPYNV…DWKCNGQSFD (80 aa).

The protein belongs to the expansin family. Expansin A subfamily.

It is found in the secreted. The protein localises to the cell wall. Its subcellular location is the membrane. Causes loosening and extension of plant cell walls by disrupting non-covalent bonding between cellulose microfibrils and matrix glucans. No enzymatic activity has been found. In Arabidopsis thaliana (Mouse-ear cress), this protein is Expansin-A24 (EXPA24).